Reading from the N-terminus, the 741-residue chain is uncharacterized protein (741 aa).

Residues 64–103 adopt a coiled-coil conformation; sequence VETLLCMLEQLTIRIEFLTKEIAQQEAAYKDIQNTQKSLV. The segment covering 137–155 has biased composition (polar residues); it reads FERQNRTAPLQSKVTTASL. Disordered stretches follow at residues 137–214, 280–318, and 330–364; these read FERQ…TGLP, RTYS…SKSS, and SVSS…FLTP. 2 stretches are compositionally biased toward low complexity: residues 161–173 and 197–209; these read RTSM…ASRT and KSKS…KSLA. The span at 298–308 shows a compositional bias: polar residues; it reads SHLPNRTTEVP. Low complexity-rich tracts occupy residues 309–318 and 330–344; these read SISKQLSKSS and SVSS…TPQS. A compositionally biased stretch (polar residues) spans 346-356; that stretch reads PRAQSASTETA. 499 to 506 serves as a coordination point for ATP; the sequence is GPPGTGKT.

Belongs to the AAA ATPase family.

Its subcellular location is the cytoplasm. It localises to the nucleus. This is an uncharacterized protein from Schizosaccharomyces pombe (strain 972 / ATCC 24843) (Fission yeast).